A 476-amino-acid chain; its full sequence is Aspartyl/glutamyl-tRNA(Asn/Gln) amidotransferase subunit B (476 aa).

It belongs to the GatB/GatE family. GatB subfamily. Heterotrimer of A, B and C subunits.

It carries out the reaction L-glutamyl-tRNA(Gln) + L-glutamine + ATP + H2O = L-glutaminyl-tRNA(Gln) + L-glutamate + ADP + phosphate + H(+). It catalyses the reaction L-aspartyl-tRNA(Asn) + L-glutamine + ATP + H2O = L-asparaginyl-tRNA(Asn) + L-glutamate + ADP + phosphate + 2 H(+). In terms of biological role, allows the formation of correctly charged Asn-tRNA(Asn) or Gln-tRNA(Gln) through the transamidation of misacylated Asp-tRNA(Asn) or Glu-tRNA(Gln) in organisms which lack either or both of asparaginyl-tRNA or glutaminyl-tRNA synthetases. The reaction takes place in the presence of glutamine and ATP through an activated phospho-Asp-tRNA(Asn) or phospho-Glu-tRNA(Gln). The polypeptide is Aspartyl/glutamyl-tRNA(Asn/Gln) amidotransferase subunit B (Lactobacillus johnsonii (strain CNCM I-12250 / La1 / NCC 533)).